The following is an 89-amino-acid chain: MSRQVFCRKYQMEMEGLDFAPFPGAKGQEFFENVSKQAWQEWLQHQTTLINEKRLNVFEPEAKKFLEEQREKFFNNDESVEKAEGWKPE.

Belongs to the Fe(2+)-trafficking protein family.

In terms of biological role, could be a mediator in iron transactions between iron acquisition and iron-requiring processes, such as synthesis and/or repair of Fe-S clusters in biosynthetic enzymes. The protein is Probable Fe(2+)-trafficking protein of Acinetobacter baumannii (strain SDF).